The sequence spans 218 residues: Octanoyltransferase (218 aa).

Positions 30-213 constitute a BPL/LPL catalytic domain; the sequence is GEIEDTLILV…YFSEVFNYDI (184 aa). Residues 75-82, 143-145, and 156-158 each bind substrate; these read RGGDVTYH, AIG, and GFA. Cysteine 174 serves as the catalytic Acyl-thioester intermediate.

Belongs to the LipB family.

It localises to the cytoplasm. The enzyme catalyses octanoyl-[ACP] + L-lysyl-[protein] = N(6)-octanoyl-L-lysyl-[protein] + holo-[ACP] + H(+). It functions in the pathway protein modification; protein lipoylation via endogenous pathway; protein N(6)-(lipoyl)lysine from octanoyl-[acyl-carrier-protein]: step 1/2. In terms of biological role, catalyzes the transfer of endogenously produced octanoic acid from octanoyl-acyl-carrier-protein onto the lipoyl domains of lipoate-dependent enzymes. Lipoyl-ACP can also act as a substrate although octanoyl-ACP is likely to be the physiological substrate. This Alkaliphilus metalliredigens (strain QYMF) protein is Octanoyltransferase.